The primary structure comprises 440 residues: L-gulonolactone oxidase (440 aa).

The region spanning 17 to 187 is the FAD-binding PCMH-type domain; that stretch reads YSCEPELYFE…LNVTIQCVPA (171 aa). Histidine 54 is modified (pros-8alpha-FAD histidine). The chain crosses the membrane as a helical span at residues 245–267; the sequence is WFWNYAIGYYLLEFLLWISVFVP.

It belongs to the oxygen-dependent FAD-linked oxidoreductase family. It depends on FAD as a cofactor.

It localises to the microsome membrane. It is found in the endoplasmic reticulum membrane. It catalyses the reaction L-gulono-1,4-lactone + O2 = L-ascorbate + H2O2 + H(+). It functions in the pathway cofactor biosynthesis; L-ascorbate biosynthesis via UDP-alpha-D-glucuronate pathway; L-ascorbate from UDP-alpha-D-glucuronate: step 4/4. Oxidizes L-gulono-1,4-lactone to hydrogen peroxide and L-xylo-hexulonolactone which spontaneously isomerizes to L-ascorbate. In Scyliorhinus torazame (Cloudy catshark), this protein is L-gulonolactone oxidase (GULO).